A 329-amino-acid chain; its full sequence is 4-hydroxythreonine-4-phosphate dehydrogenase (329 aa).

Substrate is bound by residues His136 and Thr137. A divalent metal cation is bound by residues His166, His211, and His266. Lys274, Asn283, and Arg292 together coordinate substrate.

The protein belongs to the PdxA family. Homodimer. It depends on Zn(2+) as a cofactor. Mg(2+) is required as a cofactor. Co(2+) serves as cofactor.

The protein localises to the cytoplasm. It carries out the reaction 4-(phosphooxy)-L-threonine + NAD(+) = 3-amino-2-oxopropyl phosphate + CO2 + NADH. It functions in the pathway cofactor biosynthesis; pyridoxine 5'-phosphate biosynthesis; pyridoxine 5'-phosphate from D-erythrose 4-phosphate: step 4/5. Catalyzes the NAD(P)-dependent oxidation of 4-(phosphooxy)-L-threonine (HTP) into 2-amino-3-oxo-4-(phosphooxy)butyric acid which spontaneously decarboxylates to form 3-amino-2-oxopropyl phosphate (AHAP). The sequence is that of 4-hydroxythreonine-4-phosphate dehydrogenase from Pseudomonas putida (strain ATCC 47054 / DSM 6125 / CFBP 8728 / NCIMB 11950 / KT2440).